The sequence spans 921 residues: TRPM8 channel-associated factor 1 (921 aa).

The region spanning 542 to 841 (YCWMSTGLYI…TYLQLQEAFG (300 aa)) is the Peptidase M60 domain.

This sequence belongs to the TCAF family. As to quaternary structure, interacts with TRPM8 (via N-terminus and C-terminus domains); the interaction inhibits TRPM8 channel activity. Interacts with TRPV6.

The protein localises to the cell membrane. In terms of biological role, positively regulates the plasma membrane cation channel TRPM8 activity. Involved in the recruitment of TRPM8 to the cell surface. Promotes prostate cancer cell migration inhibition in a TRPM8-dependent manner. This chain is TRPM8 channel-associated factor 1, found in Bos taurus (Bovine).